The primary structure comprises 396 residues: MKILVLNSGSSSIKFKFFDNKIVKASGLVEKIGEQNSKVILKNVLNNESFERELTINNHEEGLSIVNELFKESGILADLNALDGCGHRIVHGGRNLSEHCLVDDYVLKEIDRVSIFAPLHNPAHLAGIKTMIKAAPSVANVAIFDTAFHRTMPDFAYMYALPYDFYDKHNIRRYGFHGTSHAFVSSRAASLLEKDKSELNVISAHLGNGASVCAIEKGKSVDTSMGFTPLEGLVMGTRCGDLDPAILPFISHLKGLTIEEIDTLMNKKSGVYGICGYNDFRDIEREIEQGNDKARLALDMFCYRLVKYIGSYFAVLPKTDAIIFTGGIGENDSLVRQKVCERLAHLGIELDFELNKQRISGERMINHANSKVKVLVIPTDEELEIARITEELIGKN.

Asparagine 7 serves as a coordination point for Mg(2+). Lysine 14 contacts ATP. Arginine 88 lines the substrate pocket. Aspartate 145 (proton donor/acceptor) is an active-site residue. ATP is bound by residues 205–209, 279–281, and 327–331; these read HLGNG, DFR, and GIGEN. Glutamate 381 is a Mg(2+) binding site.

This sequence belongs to the acetokinase family. Homodimer. Requires Mg(2+) as cofactor. Mn(2+) serves as cofactor.

Its subcellular location is the cytoplasm. The catalysed reaction is acetate + ATP = acetyl phosphate + ADP. It functions in the pathway metabolic intermediate biosynthesis; acetyl-CoA biosynthesis; acetyl-CoA from acetate: step 1/2. In terms of biological role, catalyzes the formation of acetyl phosphate from acetate and ATP. Can also catalyze the reverse reaction. The polypeptide is Acetate kinase (Campylobacter jejuni subsp. jejuni serotype O:23/36 (strain 81-176)).